The following is a 298-amino-acid chain: Lipoyl synthase (298 aa).

7 residues coordinate [4Fe-4S] cluster: Cys-40, Cys-45, Cys-51, Cys-67, Cys-71, Cys-74, and Ser-280. Residues 53–269 (AVRRTATFMI…KEIAMQKGFS (217 aa)) form the Radical SAM core domain.

The protein belongs to the radical SAM superfamily. Lipoyl synthase family. It depends on [4Fe-4S] cluster as a cofactor.

The protein localises to the cytoplasm. It carries out the reaction [[Fe-S] cluster scaffold protein carrying a second [4Fe-4S](2+) cluster] + N(6)-octanoyl-L-lysyl-[protein] + 2 oxidized [2Fe-2S]-[ferredoxin] + 2 S-adenosyl-L-methionine + 4 H(+) = [[Fe-S] cluster scaffold protein] + N(6)-[(R)-dihydrolipoyl]-L-lysyl-[protein] + 4 Fe(3+) + 2 hydrogen sulfide + 2 5'-deoxyadenosine + 2 L-methionine + 2 reduced [2Fe-2S]-[ferredoxin]. It functions in the pathway protein modification; protein lipoylation via endogenous pathway; protein N(6)-(lipoyl)lysine from octanoyl-[acyl-carrier-protein]. In terms of biological role, catalyzes the radical-mediated insertion of two sulfur atoms into the C-6 and C-8 positions of the octanoyl moiety bound to the lipoyl domains of lipoate-dependent enzymes, thereby converting the octanoylated domains into lipoylated derivatives. This Bacillus velezensis (strain DSM 23117 / BGSC 10A6 / LMG 26770 / FZB42) (Bacillus amyloliquefaciens subsp. plantarum) protein is Lipoyl synthase.